The following is an 89-amino-acid chain: Small ribosomal subunit protein uS15 (89 aa).

Basic and acidic residues predominate over residues 1-21 (MSITTEEKARVMKEYGTKDGD). The tract at residues 1-24 (MSITTEEKARVMKEYGTKDGDTGS) is disordered.

It belongs to the universal ribosomal protein uS15 family. As to quaternary structure, part of the 30S ribosomal subunit. Forms a bridge to the 50S subunit in the 70S ribosome, contacting the 23S rRNA.

One of the primary rRNA binding proteins, it binds directly to 16S rRNA where it helps nucleate assembly of the platform of the 30S subunit by binding and bridging several RNA helices of the 16S rRNA. In terms of biological role, forms an intersubunit bridge (bridge B4) with the 23S rRNA of the 50S subunit in the ribosome. The protein is Small ribosomal subunit protein uS15 of Ruegeria pomeroyi (strain ATCC 700808 / DSM 15171 / DSS-3) (Silicibacter pomeroyi).